The following is a 152-amino-acid chain: Mitochondrial fission 1 protein (152 aa).

Met-1 is modified (N-acetylmethionine). Residues 1–122 (MEAVLNELVS…LIDKAMKKDG (122 aa)) are Cytoplasmic-facing. At Ser-10 the chain carries Phosphoserine. Residues 71–104 (RDYVFYLAVGNYRLKEYEKALKYVRGLLQTEPQN) form a TPR repeat. The helical transmembrane segment at 123-143 (LVGMAIVGGMALGVAGLAGLI) threads the bilayer. Residues 144–152 (GLAVSKSKS) lie on the Mitochondrial intermembrane side of the membrane.

It belongs to the FIS1 family. In terms of assembly, interacts with DNM1L/DLP1 through the TPR region; may form part of a larger protein complex at the endoplasmic reticulum-mitochondrial interface during mitochondrial fission. Interacts with MARCHF5. Interacts with MIEF1. Interacts with PEX11A, PEX11B and PEX11G. In terms of processing, ubiquitinated by MARCHF5.

The protein resides in the mitochondrion outer membrane. Its subcellular location is the peroxisome membrane. In terms of biological role, involved in the fragmentation of the mitochondrial network and its perinuclear clustering. Plays a minor role in the recruitment and association of the fission mediator dynamin-related protein 1 (DNM1L) to the mitochondrial surface and mitochondrial fission. May not be essential for the assembly of functional fission complexes and the subsequent membrane scission event. Also mediates peroxisomal fission. May act when the products of fission are directed toward mitochondrial homeostasis, mitophagy, or apoptosis. Can induce cytochrome c release from the mitochondrion to the cytosol, ultimately leading to apoptosis. The protein is Mitochondrial fission 1 protein of Rattus norvegicus (Rat).